Consider the following 65-residue polypeptide: Large ribosomal subunit protein bL35 (65 aa).

The protein belongs to the bacterial ribosomal protein bL35 family.

The protein is Large ribosomal subunit protein bL35 of Desulforapulum autotrophicum (strain ATCC 43914 / DSM 3382 / VKM B-1955 / HRM2) (Desulfobacterium autotrophicum).